Reading from the N-terminus, the 161-residue chain is 6,7-dimethyl-8-ribityllumazine synthase (161 aa).

Residues Trp31, 65-67 (TFE), and 89-91 (CVV) contribute to the 5-amino-6-(D-ribitylamino)uracil site. Residue 94–95 (DT) coordinates (2S)-2-hydroxy-3-oxobutyl phosphate. His97 serves as the catalytic Proton donor. Phe122 contacts 5-amino-6-(D-ribitylamino)uracil. Position 136 (Arg136) interacts with (2S)-2-hydroxy-3-oxobutyl phosphate.

This sequence belongs to the DMRL synthase family.

It catalyses the reaction (2S)-2-hydroxy-3-oxobutyl phosphate + 5-amino-6-(D-ribitylamino)uracil = 6,7-dimethyl-8-(1-D-ribityl)lumazine + phosphate + 2 H2O + H(+). Its pathway is cofactor biosynthesis; riboflavin biosynthesis; riboflavin from 2-hydroxy-3-oxobutyl phosphate and 5-amino-6-(D-ribitylamino)uracil: step 1/2. Functionally, catalyzes the formation of 6,7-dimethyl-8-ribityllumazine by condensation of 5-amino-6-(D-ribitylamino)uracil with 3,4-dihydroxy-2-butanone 4-phosphate. This is the penultimate step in the biosynthesis of riboflavin. The sequence is that of 6,7-dimethyl-8-ribityllumazine synthase from Porphyromonas gingivalis (strain ATCC 33277 / DSM 20709 / CIP 103683 / JCM 12257 / NCTC 11834 / 2561).